The sequence spans 440 residues: Probable D-serine dehydratase (440 aa).

An N6-(pyridoxal phosphate)lysine modification is found at lysine 111.

It belongs to the serine/threonine dehydratase family. DsdA subfamily. Requires pyridoxal 5'-phosphate as cofactor.

It catalyses the reaction D-serine = pyruvate + NH4(+). This Rhizobium leguminosarum bv. trifolii (strain WSM2304) protein is Probable D-serine dehydratase.